A 734-amino-acid chain; its full sequence is Photosystem I P700 chlorophyll a apoprotein A2 (734 aa).

The next 8 helical transmembrane spans lie at 46 to 69, 135 to 158, 175 to 199, 273 to 291, 330 to 353, 369 to 395, 417 to 439, and 517 to 535; these read IFAS…FHVA, LYTG…LHLQ, LNHH…HVAI, MAHH…GHMY, LHFQ…QHMY, AASY…IFFI, AIIS…LYVH, and FLVH…LILV. C559 and C568 together coordinate [4Fe-4S] cluster. The next 2 helical transmembrane spans lie at 575–596 and 643–665; these read AFYL…YWHW and LSVW…MFLI. H654, M662, and Y670 together coordinate chlorophyll a. W671 serves as a coordination point for phylloquinone. A helical transmembrane segment spans residues 707-727; it reads LVGLAHFSVGYIFTYAAFLIA.

It belongs to the PsaA/PsaB family. The PsaA/B heterodimer binds the P700 chlorophyll special pair and subsequent electron acceptors. PSI consists of a core antenna complex that captures photons, and an electron transfer chain that converts photonic excitation into a charge separation. The eukaryotic PSI reaction center is composed of at least 11 subunits. P700 is a chlorophyll a/chlorophyll a' dimer, A0 is one or more chlorophyll a, A1 is one or both phylloquinones and FX is a shared 4Fe-4S iron-sulfur center. is required as a cofactor.

The protein resides in the plastid. It is found in the chloroplast thylakoid membrane. The catalysed reaction is reduced [plastocyanin] + hnu + oxidized [2Fe-2S]-[ferredoxin] = oxidized [plastocyanin] + reduced [2Fe-2S]-[ferredoxin]. PsaA and PsaB bind P700, the primary electron donor of photosystem I (PSI), as well as the electron acceptors A0, A1 and FX. PSI is a plastocyanin-ferredoxin oxidoreductase, converting photonic excitation into a charge separation, which transfers an electron from the donor P700 chlorophyll pair to the spectroscopically characterized acceptors A0, A1, FX, FA and FB in turn. Oxidized P700 is reduced on the lumenal side of the thylakoid membrane by plastocyanin. In Acorus calamus (Sweet flag), this protein is Photosystem I P700 chlorophyll a apoprotein A2.